The primary structure comprises 616 residues: Dihydroxy-acid dehydratase (616 aa).

Asp-81 is a binding site for Mg(2+). Cys-122 lines the [2Fe-2S] cluster pocket. Positions 123 and 124 each coordinate Mg(2+). An N6-carboxylysine modification is found at Lys-124. Cys-195 provides a ligand contact to [2Fe-2S] cluster. Residue Glu-491 coordinates Mg(2+). The active-site Proton acceptor is the Ser-517.

It belongs to the IlvD/Edd family. In terms of assembly, homodimer. It depends on [2Fe-2S] cluster as a cofactor. Mg(2+) serves as cofactor.

The catalysed reaction is (2R)-2,3-dihydroxy-3-methylbutanoate = 3-methyl-2-oxobutanoate + H2O. It catalyses the reaction (2R,3R)-2,3-dihydroxy-3-methylpentanoate = (S)-3-methyl-2-oxopentanoate + H2O. The protein operates within amino-acid biosynthesis; L-isoleucine biosynthesis; L-isoleucine from 2-oxobutanoate: step 3/4. Its pathway is amino-acid biosynthesis; L-valine biosynthesis; L-valine from pyruvate: step 3/4. Functionally, functions in the biosynthesis of branched-chain amino acids. Catalyzes the dehydration of (2R,3R)-2,3-dihydroxy-3-methylpentanoate (2,3-dihydroxy-3-methylvalerate) into 2-oxo-3-methylpentanoate (2-oxo-3-methylvalerate) and of (2R)-2,3-dihydroxy-3-methylbutanoate (2,3-dihydroxyisovalerate) into 2-oxo-3-methylbutanoate (2-oxoisovalerate), the penultimate precursor to L-isoleucine and L-valine, respectively. The polypeptide is Dihydroxy-acid dehydratase (Pectobacterium carotovorum subsp. carotovorum (strain PC1)).